The sequence spans 422 residues: BTB/POZ domain-containing protein KCTD18 (422 aa).

The 69-residue stretch at Asp12–Thr80 folds into the BTB domain. Disordered stretches follow at residues Val289 to Pro357 and Leu376 to Lys422. Over residues Pro396–Ala406 the composition is skewed to pro residues. A compositionally biased stretch (polar residues) spans Trp413–Lys422.

The protein is BTB/POZ domain-containing protein KCTD18 (KCTD18) of Bos taurus (Bovine).